Consider the following 61-residue polypeptide: Small ribosomal subunit protein uS14 (61 aa).

Zn(2+) is bound by residues Cys24, Cys27, Cys40, and Cys43.

Belongs to the universal ribosomal protein uS14 family. Zinc-binding uS14 subfamily. In terms of assembly, part of the 30S ribosomal subunit. Contacts proteins S3 and S10. Zn(2+) serves as cofactor.

Its function is as follows. Binds 16S rRNA, required for the assembly of 30S particles and may also be responsible for determining the conformation of the 16S rRNA at the A site. In Helicobacter pylori (strain J99 / ATCC 700824) (Campylobacter pylori J99), this protein is Small ribosomal subunit protein uS14.